Here is an 850-residue protein sequence, read N- to C-terminus: Mitochondrial escape protein 2 (850 aa).

Residues Met-1–His-44 constitute a mitochondrion transit peptide. The disordered stretch occupies residues His-44 to Gly-66. Topologically, residues Val-45–Arg-287 are mitochondrial matrix. Over residues Ser-47–Asp-64 the composition is skewed to polar residues. The region spanning Thr-198 to Ile-272 is the RRM domain. Residues Ile-288–Ile-308 form a helical membrane-spanning segment. Residues Arg-309–Lys-850 lie on the Mitochondrial intermembrane side of the membrane. Over residues Lys-607–Ala-621 the composition is skewed to basic and acidic residues. Residues Lys-607–Ser-633 are disordered.

It belongs to the YME2 family.

The protein resides in the mitochondrion inner membrane. Plays a role in maintaining the mitochondrial genome and in controlling the mtDNA escape. Involved in the regulation of mtDNA nucleotide structure and number. May have a dispensable role in early maturation of pre-rRNA. This is Mitochondrial escape protein 2 (YME2) from Saccharomyces cerevisiae (strain YJM789) (Baker's yeast).